We begin with the raw amino-acid sequence, 154 residues long: MGNKNAIYILRFLIYFFIFYYILKMLEGNIMDLLTITLSKLLNLKFYKNEIIVGKNIIEISSPCTCSLEMALFLGYIFGTPDVPIKYKISYSVFGLSIITISNILRIILIINYSNMINYNVVHDVISFIIFPIALFLNWFWIYLLKMKKIIMFK.

Transmembrane regions (helical) follow at residues 6–26, 57–77, 91–111, and 125–145; these read AIYILRFLIYFFIFYYILKML, IIEISSPCTCSLEMALFLGYI, YSVFGLSIITISNILRIILII, and VISFIIFPIALFLNWFWIYLL. The Acyl-thioester intermediate role is filled by Cys64. Residue Arg106 is the Proton donor of the active site.

Belongs to the exosortase/archaeosortase family. Archaeosortase D subfamily.

Its subcellular location is the cell membrane. Functionally, transpeptidase that recognizes and modifies its substrate by proteolytic cleavage of a sorting signal. Following cleavage, a covalent intermediate is formed via a thioester bond between the archaeosortase and its substrate, which is then transferred and covalently attached to the cell membrane. This chain is Probable archaeosortase D, found in Methanocaldococcus jannaschii (strain ATCC 43067 / DSM 2661 / JAL-1 / JCM 10045 / NBRC 100440) (Methanococcus jannaschii).